Here is a 503-residue protein sequence, read N- to C-terminus: AMP phosphorylase (503 aa).

Residues glycine 168, 194-199 (SRAITS), and threonine 203 each bind AMP. Aspartate 256 serves as the catalytic Proton donor. AMP contacts are provided by serine 264 and lysine 288.

Belongs to the thymidine/pyrimidine-nucleoside phosphorylase family. Type 2 subfamily.

It carries out the reaction AMP + phosphate = alpha-D-ribose 1,5-bisphosphate + adenine. It catalyses the reaction CMP + phosphate = cytosine + alpha-D-ribose 1,5-bisphosphate. The enzyme catalyses UMP + phosphate = alpha-D-ribose 1,5-bisphosphate + uracil. Catalyzes the conversion of AMP and phosphate to adenine and ribose 1,5-bisphosphate (R15P). Exhibits phosphorylase activity toward CMP and UMP in addition to AMP. Functions in an archaeal AMP degradation pathway, together with R15P isomerase and RubisCO. The chain is AMP phosphorylase (deoA) from Pyrococcus abyssi (strain GE5 / Orsay).